Consider the following 592-residue polypeptide: MPGFNYGGKGDGTGWSSERGSGPEPGGGSHGNSGGHDRGDSSNVGNESVTVMKPGDSYNTPWGKVIINAAGQPTMNGTVMTADNSSMVPYGRGFTRVLNSLVNNPVSPAGQNGGKSPVQTAVENYLMVQSGNLPPGYWLSNGKVMTEVREERTSGGGGKNGNERTWTVKVPREVPQLTASYNEGMRIRQEAADRARAEANARALAEEEARAIASGKSKAEFDAGKRVEAAQAAINTAQLNVNNLSGAVSAANQVITQKQAEMTPLKNELAAANQRVQETLKFINDPIRSRIHFNMRSGLIRAQHNVDTKQNEINAAVANRDALNSQLSQANNILQNARNEKSAADAALSAATAQRLQAEAALRAAAEAAEKARQRQAEEAERQRQAMEVAEKAKDERELLEKTSELIAGMGDKIGEHLGDKYKAIAKDIADNIKNFQGKTIRSFDDAMASLNKITANPAMKINKADRDALVNAWKHVDAQDMANKLGNLSKAFKVADVVMKVEKVREKSIEGYETGNWGPLMLEVESWVLSGIASSVALGIFSATLGAYALSLGVPAIAVGIAGILLAAVVGALIDDKFADALNNEIIRPAH.

Composition is skewed to gly residues over residues 1–13 (MPGFNYGGKGDGT) and 23–34 (PEPGGGSHGNSG). Disordered stretches follow at residues 1-57 (MPGF…PGDS) and 373-395 (RQRQAEEAERQRQAMEVAEKAKD). A run of 2 helical transmembrane segments spans residues 528–548 (WVLSGIASSVALGIFSATLGA) and 555–575 (VPAIAVGIAGILLAAVVGALI).

The protein belongs to the channel forming colicin family.

It localises to the cell membrane. Functionally, this colicin is a channel-forming colicin. This class of transmembrane toxins depolarize the cytoplasmic membrane, leading to dissipation of cellular energy. Colicins are polypeptide toxins produced by and active against E.coli and closely related bacteria. This is Colicin-A (caa) from Citrobacter freundii.